The chain runs to 197 residues: UPF0228 protein MA_3125 (197 aa).

It belongs to the UPF0228 family.

This is UPF0228 protein MA_3125 from Methanosarcina acetivorans (strain ATCC 35395 / DSM 2834 / JCM 12185 / C2A).